We begin with the raw amino-acid sequence, 299 residues long: MTAFQNAGPSITRLAPAKINLALHVTGRRDDGYHLLDMLVVFADQGDRIHIEKAGSDSFTVSGPFASGIPAGRGNLVLKARDALRQHGGPDLSPVAIHLEKNLPIASGIGGGSSDAAATLLALNTLWQLDLDFEMLAAIGLSLGADLPMCLHGAAHGTPLIARGIGEELNDVSGIAALPMLLVNDGTALATPDVFRALTRRENAPLPPPACEGTDALCAYLRETRNDLLPAAISLAPQIEPKLALLRAKGALYARMSGSGATCFAIFSDKSALTRAAKEIADENPGWFAVPSHSFPSRA.

Lysine 18 is a catalytic residue. 104-114 (PIASGIGGGSS) is an ATP binding site. Residue aspartate 146 is part of the active site.

It belongs to the GHMP kinase family. IspE subfamily.

It carries out the reaction 4-CDP-2-C-methyl-D-erythritol + ATP = 4-CDP-2-C-methyl-D-erythritol 2-phosphate + ADP + H(+). It functions in the pathway isoprenoid biosynthesis; isopentenyl diphosphate biosynthesis via DXP pathway; isopentenyl diphosphate from 1-deoxy-D-xylulose 5-phosphate: step 3/6. In terms of biological role, catalyzes the phosphorylation of the position 2 hydroxy group of 4-diphosphocytidyl-2C-methyl-D-erythritol. The polypeptide is 4-diphosphocytidyl-2-C-methyl-D-erythritol kinase (Brucella melitensis biotype 1 (strain ATCC 23456 / CCUG 17765 / NCTC 10094 / 16M)).